We begin with the raw amino-acid sequence, 402 residues long: Phosphoribulokinase, chloroplastic (402 aa).

The transit peptide at 1-51 (MAVCTVYTIPTTTHLGSSFNQNNKQVFFNYKRSSSSNNTLFTTRPSYVITC) directs the protein to the chloroplast. Residues cysteine 67 and cysteine 106 are joined by a disulfide bond.

The protein belongs to the phosphoribulokinase family.

It is found in the plastid. The protein resides in the chloroplast. The catalysed reaction is D-ribulose 5-phosphate + ATP = D-ribulose 1,5-bisphosphate + ADP + H(+). Its pathway is carbohydrate biosynthesis; Calvin cycle. With respect to regulation, light regulated via thioredoxin by reversible oxidation/reduction of sulfhydryl/disulfide groups. In Spinacia oleracea (Spinach), this protein is Phosphoribulokinase, chloroplastic.